The sequence spans 76 residues: Omega-agatoxin-Aa3b (76 aa).

6 cysteine pairs are disulfide-bonded: C2/C19, C9/C25, C16/C52, C18/C40, C27/C38, and C59/C67.

This sequence belongs to the neurotoxin 04 (omega-agtx) family. 03 (type II/III omega-agtx) subfamily. As to expression, expressed by the venom gland.

It localises to the secreted. Functionally, omega-agatoxins are antagonists of voltage-gated calcium channels. This toxin blocks calcium channels in insect central neurons but not at peripheral neuromuscular junctions. In vertebrates, it is broadly active against all high-threshold Cav1/CACNA1 channels and Cav2.2/CACNA1B channels. This chain is Omega-agatoxin-Aa3b, found in Agelenopsis aperta (North American funnel-web spider).